We begin with the raw amino-acid sequence, 103 residues long: Integration host factor subunit alpha (103 aa).

This sequence belongs to the bacterial histone-like protein family. As to quaternary structure, heterodimer of an alpha and a beta chain.

Functionally, this protein is one of the two subunits of integration host factor, a specific DNA-binding protein that functions in genetic recombination as well as in transcriptional and translational control. This Bartonella bacilliformis (strain ATCC 35685 / KC583 / Herrer 020/F12,63) protein is Integration host factor subunit alpha.